Reading from the N-terminus, the 118-residue chain is V-type proton ATPase subunit G 2 (118 aa).

The interval 25 to 90 (ARKRKARRLK…VQGMQSSQQR (66 aa)) is disordered. Residues 35–56 (QAKEEAQMEVEQYRREREHEFQ) show a composition bias toward basic and acidic residues. Composition is skewed to polar residues over residues 57–69 (SKQQ…QGNL) and 78–89 (RRQVQGMQSSQQ).

The protein belongs to the V-ATPase G subunit family. V-ATPase is a heteromultimeric enzyme made up of two complexes: the ATP-hydrolytic V1 complex and the proton translocation V0 complex. The V1 complex consists of three catalytic AB heterodimers that form a heterohexamer, three peripheral stalks each consisting of EG heterodimers, one central rotor including subunits D and F, and the regulatory subunits C and H. The proton translocation complex V0 consists of the proton transport subunit a, a ring of proteolipid subunits c9c'', rotary subunit d, subunits e and f, and the accessory subunits ATP6AP1/Ac45 and ATP6AP2/PRR. In terms of tissue distribution, brain.

It localises to the melanosome. Its subcellular location is the cytoplasmic vesicle. It is found in the clathrin-coated vesicle membrane. Functionally, subunit of the V1 complex of vacuolar(H+)-ATPase (V-ATPase), a multisubunit enzyme composed of a peripheral complex (V1) that hydrolyzes ATP and a membrane integral complex (V0) that translocates protons. V-ATPase is responsible for acidifying and maintaining the pH of intracellular compartments and in some cell types, is targeted to the plasma membrane, where it is responsible for acidifying the extracellular environment. The sequence is that of V-type proton ATPase subunit G 2 (ATP6V1G2) from Homo sapiens (Human).